The following is a 306-amino-acid chain: Homoserine O-acetyltransferase (306 aa).

The active-site Acyl-thioester intermediate is the Cys-142. Substrate contacts are provided by Lys-163 and Ser-192. His-235 acts as the Proton acceptor in catalysis. Residue Glu-237 is part of the active site. Arg-249 lines the substrate pocket.

It belongs to the MetA family.

It is found in the cytoplasm. The enzyme catalyses L-homoserine + acetyl-CoA = O-acetyl-L-homoserine + CoA. Its pathway is amino-acid biosynthesis; L-methionine biosynthesis via de novo pathway; O-acetyl-L-homoserine from L-homoserine: step 1/1. Its function is as follows. Transfers an acetyl group from acetyl-CoA to L-homoserine, forming acetyl-L-homoserine. The protein is Homoserine O-acetyltransferase of Brevibacillus brevis (strain 47 / JCM 6285 / NBRC 100599).